The following is a 729-amino-acid chain: Fatty acid oxidation complex subunit alpha (729 aa).

The enoyl-CoA hydratase/isomerase stretch occupies residues 1-189; that stretch reads MLYKGDTLYL…KIGLVDGVVA (189 aa). Position 296 (aspartate 296) interacts with substrate. A 3-hydroxyacyl-CoA dehydrogenase region spans residues 311–729; it reads ETPKHAAVLG…ARPVGALKTA (419 aa). Residues methionine 324, aspartate 343, 400–402, lysine 407, and serine 429 each bind NAD(+); that span reads VVE. The For 3-hydroxyacyl-CoA dehydrogenase activity role is filled by histidine 450. Position 453 (asparagine 453) interacts with NAD(+). Substrate-binding residues include asparagine 500 and tyrosine 660.

The protein in the N-terminal section; belongs to the enoyl-CoA hydratase/isomerase family. This sequence in the C-terminal section; belongs to the 3-hydroxyacyl-CoA dehydrogenase family. As to quaternary structure, heterotetramer of two alpha chains (FadB) and two beta chains (FadA).

It catalyses the reaction a (3S)-3-hydroxyacyl-CoA + NAD(+) = a 3-oxoacyl-CoA + NADH + H(+). The catalysed reaction is a (3S)-3-hydroxyacyl-CoA = a (2E)-enoyl-CoA + H2O. It carries out the reaction a 4-saturated-(3S)-3-hydroxyacyl-CoA = a (3E)-enoyl-CoA + H2O. The enzyme catalyses (3S)-3-hydroxybutanoyl-CoA = (3R)-3-hydroxybutanoyl-CoA. It catalyses the reaction a (3Z)-enoyl-CoA = a 4-saturated (2E)-enoyl-CoA. The catalysed reaction is a (3E)-enoyl-CoA = a 4-saturated (2E)-enoyl-CoA. It participates in lipid metabolism; fatty acid beta-oxidation. In terms of biological role, involved in the aerobic and anaerobic degradation of long-chain fatty acids via beta-oxidation cycle. Catalyzes the formation of 3-oxoacyl-CoA from enoyl-CoA via L-3-hydroxyacyl-CoA. It can also use D-3-hydroxyacyl-CoA and cis-3-enoyl-CoA as substrate. The sequence is that of Fatty acid oxidation complex subunit alpha from Klebsiella pneumoniae (strain 342).